Here is a 1189-residue protein sequence, read N- to C-terminus: Tyrosine-protein phosphatase non-receptor type 14 (1189 aa).

The FERM domain occupies 21 to 306 (FVTRIRLLDS…TRHKFYKQNK (286 aa)). Serine 314, serine 461, serine 486, serine 591, serine 593, serine 594, and serine 646 each carry phosphoserine. The disordered stretch occupies residues 744–775 (ARIPNRPPPEYPGPRKSVSNGALRQDQGTPLP). Residues 760–771 (SVSNGALRQDQG) show a composition bias toward polar residues. Serine 833 carries the phosphoserine modification. The Tyrosine-protein phosphatase domain maps to 911–1182 (VFTEYEQIPN…KFVYQVLVQF (272 aa)). The active-site Phosphocysteine intermediate is cysteine 1123. Residues 1123 to 1129 (CSAGVGR) and glutamine 1167 each bind substrate.

Belongs to the protein-tyrosine phosphatase family. Non-receptor class subfamily. Interacts with FLT4; the interaction is enhanced by stimulation with VEGFC. Interacts (via PPxY motifs) with YAP1 (via WW domains); this interaction leads to the cytoplasmic sequestration of YAP1 and inhibits its transcriptional coactivator activity. In terms of processing, ubiquitinated by the ECS (Elongin BC-CUL2/5-SOCS-box protein)/LRR1 E3 ligase complex and subsequently targeted to proteasomal degradation. As to expression, thymus; in cells of both hematopoietic and non-hematopoietic origins.

It is found in the cytoplasm. The protein localises to the cytoskeleton. Its subcellular location is the nucleus. It catalyses the reaction O-phospho-L-tyrosyl-[protein] + H2O = L-tyrosyl-[protein] + phosphate. Functionally, protein tyrosine phosphatase which may play a role in the regulation of lymphangiogenesis, cell-cell adhesion, cell-matrix adhesion, cell migration, cell growth and also regulates TGF-beta gene expression, thereby modulating epithelial-mesenchymal transition. Mediates beta-catenin dephosphorylation at adhesion junctions. Acts as a negative regulator of the oncogenic property of YAP, a downstream target of the hippo pathway, in a cell density-dependent manner. May function as a tumor suppressor. This Mus musculus (Mouse) protein is Tyrosine-protein phosphatase non-receptor type 14 (Ptpn14).